Consider the following 154-residue polypeptide: Thioredoxin-like protein CXXS2 (154 aa).

The Thioredoxin domain occupies 23–148 (RRNKTQARSQ…LQKKTAAAAN (126 aa)). Residue serine 31 is modified to Phosphoserine.

This sequence belongs to the thioredoxin family. In terms of tissue distribution, ubiquitous.

Its subcellular location is the cytoplasm. Possesses low disulfide reductase activity, but efficient protein disulfide isomerase activity. Does not possess deglutathionylation activity. This is Thioredoxin-like protein CXXS2 (CXXS2) from Arabidopsis thaliana (Mouse-ear cress).